The primary structure comprises 70 residues: uncharacterized protein (70 aa).

Residues Ile-15–Val-37 form a helical membrane-spanning segment.

The protein localises to the membrane. This is an uncharacterized protein from Dictyostelium discoideum (Social amoeba).